We begin with the raw amino-acid sequence, 421 residues long: UDP-N-acetylglucosamine 1-carboxyvinyltransferase (421 aa).

A phosphoenolpyruvate-binding site is contributed by 22-23 (KN). Residue R93 participates in UDP-N-acetyl-alpha-D-glucosamine binding. C117 (proton donor) is an active-site residue. At C117 the chain carries 2-(S-cysteinyl)pyruvic acid O-phosphothioketal. UDP-N-acetyl-alpha-D-glucosamine contacts are provided by residues 122-126 (RPVDL), D308, and I330.

This sequence belongs to the EPSP synthase family. MurA subfamily.

The protein localises to the cytoplasm. The catalysed reaction is phosphoenolpyruvate + UDP-N-acetyl-alpha-D-glucosamine = UDP-N-acetyl-3-O-(1-carboxyvinyl)-alpha-D-glucosamine + phosphate. Its pathway is cell wall biogenesis; peptidoglycan biosynthesis. In terms of biological role, cell wall formation. Adds enolpyruvyl to UDP-N-acetylglucosamine. This chain is UDP-N-acetylglucosamine 1-carboxyvinyltransferase, found in Pseudomonas putida (strain GB-1).